A 169-amino-acid chain; its full sequence is Ubiquitin-conjugating enzyme E2 2 (169 aa).

The region spanning 4–150 (AAKRRLIRDF…VKKTVELSWV (147 aa)) is the UBC core domain. Cys88 serves as the catalytic Glycyl thioester intermediate.

Belongs to the ubiquitin-conjugating enzyme family.

The protein localises to the cytoplasm. It localises to the nucleus. The catalysed reaction is S-ubiquitinyl-[E1 ubiquitin-activating enzyme]-L-cysteine + [E2 ubiquitin-conjugating enzyme]-L-cysteine = [E1 ubiquitin-activating enzyme]-L-cysteine + S-ubiquitinyl-[E2 ubiquitin-conjugating enzyme]-L-cysteine.. It functions in the pathway protein modification; protein ubiquitination. Its function is as follows. Catalyzes the covalent attachment of ubiquitin to other proteins. Plays a role in transcription regulation by catalyzing the monoubiquitination of histone H2B to form H2BK123ub1. H2BK123ub1 gives a specific tag for epigenetic transcriptional activation and is also a prerequisite for H3K4me and H3K79me formation. Also involved in postreplication repair of UV-damaged DNA, in N-end rule-dependent protein degradation and in sporulation. This chain is Ubiquitin-conjugating enzyme E2 2 (UBC2), found in Cryptococcus neoformans var. neoformans serotype D (strain B-3501A) (Filobasidiella neoformans).